The sequence spans 162 residues: UPF0763 protein Sdel_0383 (162 aa).

Belongs to the UPF0763 family.

The chain is UPF0763 protein Sdel_0383 from Sulfurospirillum deleyianum (strain ATCC 51133 / DSM 6946 / 5175).